We begin with the raw amino-acid sequence, 227 residues long: Trypsin (227 aa).

In terms of domain architecture, Peptidase S1 spans 1-223 (IVGGEDANVQ…YYDVLMEQIN (223 aa)). Cys-27 and Cys-43 are oxidised to a cystine. Residues His-42 and Asp-88 each act as charge relay system in the active site. 2 disulfide bridges follow: Cys-150-Cys-164 and Cys-175-Cys-199. Ser-179 serves as the catalytic Charge relay system.

Belongs to the peptidase S1 family.

The enzyme catalyses Preferential cleavage: Arg-|-Xaa, Lys-|-Xaa.. This Saccharopolyspora erythraea (Streptomyces erythraeus) protein is Trypsin.